Reading from the N-terminus, the 71-residue chain is Small ribosomal subunit protein bS21 (71 aa).

The protein belongs to the bacterial ribosomal protein bS21 family.

The polypeptide is Small ribosomal subunit protein bS21 (Photobacterium profundum (strain SS9)).